The sequence spans 188 residues: Pyridoxal 5'-phosphate synthase subunit PdxT (188 aa).

Residue 47–49 coordinates L-glutamine; the sequence is GES. The active-site Nucleophile is C79. Residues R106 and 134–135 contribute to the L-glutamine site; that span reads IR. Residues H169 and E171 each act as charge relay system in the active site.

The protein belongs to the glutaminase PdxT/SNO family. As to quaternary structure, in the presence of PdxS, forms a dodecamer of heterodimers. Only shows activity in the heterodimer.

It catalyses the reaction aldehydo-D-ribose 5-phosphate + D-glyceraldehyde 3-phosphate + L-glutamine = pyridoxal 5'-phosphate + L-glutamate + phosphate + 3 H2O + H(+). The enzyme catalyses L-glutamine + H2O = L-glutamate + NH4(+). The protein operates within cofactor biosynthesis; pyridoxal 5'-phosphate biosynthesis. Catalyzes the hydrolysis of glutamine to glutamate and ammonia as part of the biosynthesis of pyridoxal 5'-phosphate. The resulting ammonia molecule is channeled to the active site of PdxS. This chain is Pyridoxal 5'-phosphate synthase subunit PdxT, found in Caldicellulosiruptor saccharolyticus (strain ATCC 43494 / DSM 8903 / Tp8T 6331).